Consider the following 253-residue polypeptide: UPF0246 protein LBA1843 (253 aa).

The protein belongs to the UPF0246 family.

This is UPF0246 protein LBA1843 from Lactobacillus acidophilus (strain ATCC 700396 / NCK56 / N2 / NCFM).